A 148-amino-acid polypeptide reads, in one-letter code: Large ribosomal subunit protein bL9 (148 aa).

Belongs to the bacterial ribosomal protein bL9 family.

Binds to the 23S rRNA. The protein is Large ribosomal subunit protein bL9 of Aeromonas salmonicida (strain A449).